Reading from the N-terminus, the 143-residue chain is Hemoglobin subunit alpha (143 aa).

The Globin domain maps to Lys-3 to Arg-143. His-60 is a binding site for O2. Position 89 (His-89) interacts with heme b.

It belongs to the globin family. In terms of assembly, heterotetramer of two alpha chains and two beta chains. In terms of tissue distribution, red blood cells.

Its function is as follows. Involved in oxygen transport from the lung to the various peripheral tissues. The protein is Hemoglobin subunit alpha (HBA) of Ambystoma mexicanum (Axolotl).